We begin with the raw amino-acid sequence, 178 residues long: Transcription antitermination protein NusB (178 aa).

It belongs to the NusB family.

Involved in transcription antitermination. Required for transcription of ribosomal RNA (rRNA) genes. Binds specifically to the boxA antiterminator sequence of the ribosomal RNA (rrn) operons. The polypeptide is Transcription antitermination protein NusB (Alkalilimnicola ehrlichii (strain ATCC BAA-1101 / DSM 17681 / MLHE-1)).